Here is a 400-residue protein sequence, read N- to C-terminus: Acetate kinase (400 aa).

Asparagine 10 serves as a coordination point for Mg(2+). Lysine 17 contacts ATP. Arginine 91 provides a ligand contact to substrate. The Proton donor/acceptor role is filled by aspartate 150. ATP contacts are provided by residues 210 to 214 (HLGNG), 285 to 287 (DCR), and 333 to 337 (GIGEN). Glutamate 387 contacts Mg(2+).

Belongs to the acetokinase family. Homodimer. Mg(2+) serves as cofactor. Requires Mn(2+) as cofactor.

It is found in the cytoplasm. The catalysed reaction is acetate + ATP = acetyl phosphate + ADP. It participates in metabolic intermediate biosynthesis; acetyl-CoA biosynthesis; acetyl-CoA from acetate: step 1/2. Its function is as follows. Catalyzes the formation of acetyl phosphate from acetate and ATP. Can also catalyze the reverse reaction. The polypeptide is Acetate kinase (Escherichia coli O157:H7).